The chain runs to 481 residues: Aspartyl/glutamyl-tRNA(Asn/Gln) amidotransferase subunit B (481 aa).

Belongs to the GatB/GatE family. GatB subfamily. Heterotrimer of A, B and C subunits.

The enzyme catalyses L-glutamyl-tRNA(Gln) + L-glutamine + ATP + H2O = L-glutaminyl-tRNA(Gln) + L-glutamate + ADP + phosphate + H(+). The catalysed reaction is L-aspartyl-tRNA(Asn) + L-glutamine + ATP + H2O = L-asparaginyl-tRNA(Asn) + L-glutamate + ADP + phosphate + 2 H(+). In terms of biological role, allows the formation of correctly charged Asn-tRNA(Asn) or Gln-tRNA(Gln) through the transamidation of misacylated Asp-tRNA(Asn) or Glu-tRNA(Gln) in organisms which lack either or both of asparaginyl-tRNA or glutaminyl-tRNA synthetases. The reaction takes place in the presence of glutamine and ATP through an activated phospho-Asp-tRNA(Asn) or phospho-Glu-tRNA(Gln). The polypeptide is Aspartyl/glutamyl-tRNA(Asn/Gln) amidotransferase subunit B (Marinomonas sp. (strain MWYL1)).